The chain runs to 438 residues: MPYFPDVDRVRYEGPDSDSPLAFRHYDADKLVLGKPMREHLRMAACYWHTFVWPGADMFGVGTFKRPWQGSGDPMELAIGKAEAAFEFFSKLGIDYYSFHDTDVAPEGASLKEYRHNFAHMVDHLERHQQQSGIKLLWGTANCFSNPRFAAGAASNPDPEVFAYAATQVFSAMNATQRLKGSNYVLWGGREGYETLLNTDLKREREQLGRFMRMVVEHKHKIGFKGDLLIEPKPQEPTKHQYDYDSATVFGFLQQYGLENEIKVNIEANHATLAGHSFHHEIATAVSLGIFGSIDANRGDPQNGWDTDQFPNSVEEMTLATYEILKAGGFTNGGFNFDSKVRRQSLDDIDLFHGHVAAMDVLALALERAAAMLQNDKLQHFKDQRYAGWQQPFGQSVLAGEFSLASLAEHAFANELNPQAVSGRQELLEGVVNRFIYA.

Catalysis depends on residues His100 and Asp103. Mg(2+) is bound by residues Glu231, Glu267, His270, Asp295, Asp306, Asp308, and Asp338.

It belongs to the xylose isomerase family. Homotetramer. Mg(2+) serves as cofactor.

The protein resides in the cytoplasm. It carries out the reaction alpha-D-xylose = alpha-D-xylulofuranose. The sequence is that of Xylose isomerase from Pseudomonas syringae pv. syringae (strain B728a).